A 644-amino-acid chain; its full sequence is Exoribonuclease 2 (644 aa).

The region spanning 189–516 (RQDLTALNFV…NHRLLKAVIK (328 aa)) is the RNB domain. Residues 561 to 643 (NTRFAAEIID…ETRSIIARPA (83 aa)) form the S1 motif domain.

This sequence belongs to the RNR ribonuclease family. RNase II subfamily.

Its subcellular location is the cytoplasm. The catalysed reaction is Exonucleolytic cleavage in the 3'- to 5'-direction to yield nucleoside 5'-phosphates.. Involved in mRNA degradation. Hydrolyzes single-stranded polyribonucleotides processively in the 3' to 5' direction. The chain is Exoribonuclease 2 from Salmonella choleraesuis (strain SC-B67).